The following is a 205-amino-acid chain: LexA repressor (205 aa).

The segment at residues 29 to 49 (IRDICKATGLRSSSTVYNYLN) is a DNA-binding region (H-T-H motif). Active-site for autocatalytic cleavage activity residues include serine 128 and lysine 165.

The protein belongs to the peptidase S24 family. In terms of assembly, homodimer.

The catalysed reaction is Hydrolysis of Ala-|-Gly bond in repressor LexA.. Functionally, represses a number of genes involved in the response to DNA damage (SOS response), including recA and lexA. In the presence of single-stranded DNA, RecA interacts with LexA causing an autocatalytic cleavage which disrupts the DNA-binding part of LexA, leading to derepression of the SOS regulon and eventually DNA repair. The sequence is that of LexA repressor from Moorella thermoacetica (strain ATCC 39073 / JCM 9320).